Reading from the N-terminus, the 318-residue chain is tRNA-cytidine(32) 2-sulfurtransferase (318 aa).

The PP-loop motif motif lies at 52-57; sequence SGGKDS. The [4Fe-4S] cluster site is built by Cys127, Cys130, and Cys218.

The protein belongs to the TtcA family. Homodimer. The cofactor is Mg(2+). It depends on [4Fe-4S] cluster as a cofactor.

The protein resides in the cytoplasm. The enzyme catalyses cytidine(32) in tRNA + S-sulfanyl-L-cysteinyl-[cysteine desulfurase] + AH2 + ATP = 2-thiocytidine(32) in tRNA + L-cysteinyl-[cysteine desulfurase] + A + AMP + diphosphate + H(+). The protein operates within tRNA modification. In terms of biological role, catalyzes the ATP-dependent 2-thiolation of cytidine in position 32 of tRNA, to form 2-thiocytidine (s(2)C32). The sulfur atoms are provided by the cysteine/cysteine desulfurase (IscS) system. This chain is tRNA-cytidine(32) 2-sulfurtransferase, found in Actinobacillus pleuropneumoniae serotype 5b (strain L20).